The following is a 408-amino-acid chain: MTSHTLNELIAEGVRGRYILVRSDLNVPLDGSAVTDDGRIKASLPVLKKLSDAGARVLVTAHLGRPKGAPEDKYSLKPAAARLAELADFKVQLANDTVGDSAKELAAGLQDGEVLVLENVRFDARETSKDDAERGAFADELVALTGTNGAYVDDAFGAVHRKHASVFDVATRLPSYLGDLVHTEVEVLRKLTTDTQRPYVVVLGGSKVSDKLAVIDNLLGKADTILVGGGMLFTFLAAAGHKVAGSLLEEDQIPVVQDYLKRASDAGTSFVIPTDVVVASRFAADAEHEVVKADAIEDSTFGASGIGLDIGPESAAAFAAQIEGAKTVFWNGPMGVFEFEAFSSGTRAIAQALTDTVAFTVVGGGDSAAAVRTLGFEDSQFGHISTGGGASLEYLEGKELPGLSVLDR.

Residues 24 to 26 (DLN), Arg-39, 62 to 65 (HLGR), Arg-121, and Arg-161 each bind substrate. ATP contacts are provided by residues Lys-211, Gly-307, Glu-338, and 364 to 367 (GGDS).

It belongs to the phosphoglycerate kinase family. In terms of assembly, monomer.

It is found in the cytoplasm. The catalysed reaction is (2R)-3-phosphoglycerate + ATP = (2R)-3-phospho-glyceroyl phosphate + ADP. Its pathway is carbohydrate degradation; glycolysis; pyruvate from D-glyceraldehyde 3-phosphate: step 2/5. The chain is Phosphoglycerate kinase from Paenarthrobacter aurescens (strain TC1).